A 580-amino-acid chain; its full sequence is Nuclear body protein SP140-like protein (580 aa).

The HSR domain occupies Ser33–Gln149. Residues Gln155 to Asp293 are disordered. A compositionally biased stretch (basic and acidic residues) spans Glu156 to Leu170. Lys169 is covalently cross-linked (Glycyl lysine isopeptide (Lys-Gly) (interchain with G-Cter in SUMO2)). A Phosphoserine modification is found at Ser180. The span at Lys207–Gly219 shows a compositional bias: basic residues. A compositionally biased stretch (polar residues) spans Gly224–Asn236. Positions Gln280–Lys290 are enriched in basic residues. Lys292 is covalently cross-linked (Glycyl lysine isopeptide (Lys-Gly) (interchain with G-Cter in SUMO2)). The SAND domain occupies Asp293–Pro374. The PHD-type zinc-finger motif lies at Leu403 to Lys449. Residues Gln467 to Val570 form the Bromo domain.

This is Nuclear body protein SP140-like protein (SP140L) from Homo sapiens (Human).